The following is a 704-amino-acid chain: 1,4-alpha-glucan-branching enzyme (704 aa).

Trp94 and Lys131 together coordinate (1,4-alpha-D-glucosyl)n. Ser190 is modified (phosphoserine). Asp356 functions as the Nucleophile in the catalytic mechanism. Glu417 functions as the Proton donor in the catalytic mechanism.

This sequence belongs to the glycosyl hydrolase 13 family. GlgB subfamily.

Its subcellular location is the cytoplasm. The enzyme catalyses Transfers a segment of a (1-&gt;4)-alpha-D-glucan chain to a primary hydroxy group in a similar glucan chain.. It functions in the pathway glycan biosynthesis; glycogen biosynthesis. Functionally, glycogen-branching enzyme participates in the glycogen biosynthetic process along with glycogenin and glycogen synthase. Generates alpha-1,6-glucosidic branches from alpha-1,4-linked glucose chains, to increase solubility of the glycogen polymer. This is 1,4-alpha-glucan-branching enzyme (GLC3) from Saccharomyces cerevisiae (strain ATCC 204508 / S288c) (Baker's yeast).